The following is a 148-amino-acid chain: NADPH-dependent 7-cyano-7-deazaguanine reductase (148 aa).

Residue Cys50 is the Thioimide intermediate of the active site. Asp57 serves as the catalytic Proton donor. Residues 72 to 74 and 91 to 92 contribute to the substrate site; these read VES and HE.

The protein belongs to the GTP cyclohydrolase I family. QueF type 1 subfamily.

The protein localises to the cytoplasm. It catalyses the reaction 7-aminomethyl-7-carbaguanine + 2 NADP(+) = 7-cyano-7-deazaguanine + 2 NADPH + 3 H(+). It functions in the pathway tRNA modification; tRNA-queuosine biosynthesis. Functionally, catalyzes the NADPH-dependent reduction of 7-cyano-7-deazaguanine (preQ0) to 7-aminomethyl-7-deazaguanine (preQ1). The polypeptide is NADPH-dependent 7-cyano-7-deazaguanine reductase (Helicobacter pylori (strain P12)).